Reading from the N-terminus, the 357-residue chain is Elongation factor Ts (357 aa).

The involved in Mg(2+) ion dislocation from EF-Tu stretch occupies residues 82–85; that stretch reads TDFV.

This sequence belongs to the EF-Ts family.

It localises to the cytoplasm. Functionally, associates with the EF-Tu.GDP complex and induces the exchange of GDP to GTP. It remains bound to the aminoacyl-tRNA.EF-Tu.GTP complex up to the GTP hydrolysis stage on the ribosome. The protein is Elongation factor Ts of Campylobacter jejuni subsp. jejuni serotype O:6 (strain 81116 / NCTC 11828).